Reading from the N-terminus, the 491-residue chain is UDP-N-acetylmuramate--L-alanine ligase (491 aa).

126–132 contacts ATP; it reads GTHGKTT.

The protein belongs to the MurCDEF family.

It is found in the cytoplasm. It carries out the reaction UDP-N-acetyl-alpha-D-muramate + L-alanine + ATP = UDP-N-acetyl-alpha-D-muramoyl-L-alanine + ADP + phosphate + H(+). It participates in cell wall biogenesis; peptidoglycan biosynthesis. Its function is as follows. Cell wall formation. The polypeptide is UDP-N-acetylmuramate--L-alanine ligase (Klebsiella pneumoniae subsp. pneumoniae (strain ATCC 700721 / MGH 78578)).